We begin with the raw amino-acid sequence, 315 residues long: Ribose-phosphate pyrophosphokinase (315 aa).

ATP is bound by residues 37 to 39 and 96 to 97; these read DGE and RQ. Positions 131 and 171 each coordinate Mg(2+). The active site involves Lys-195. D-ribose 5-phosphate is bound by residues Arg-197, Asp-221, and 225-229; that span reads DTGGT.

This sequence belongs to the ribose-phosphate pyrophosphokinase family. Class I subfamily. In terms of assembly, homohexamer. Mg(2+) serves as cofactor.

The protein resides in the cytoplasm. The enzyme catalyses D-ribose 5-phosphate + ATP = 5-phospho-alpha-D-ribose 1-diphosphate + AMP + H(+). It participates in metabolic intermediate biosynthesis; 5-phospho-alpha-D-ribose 1-diphosphate biosynthesis; 5-phospho-alpha-D-ribose 1-diphosphate from D-ribose 5-phosphate (route I): step 1/1. In terms of biological role, involved in the biosynthesis of the central metabolite phospho-alpha-D-ribosyl-1-pyrophosphate (PRPP) via the transfer of pyrophosphoryl group from ATP to 1-hydroxyl of ribose-5-phosphate (Rib-5-P). The chain is Ribose-phosphate pyrophosphokinase from Pasteurella multocida (strain Pm70).